We begin with the raw amino-acid sequence, 721 residues long: Mitogen-activated protein kinase 6 (721 aa).

Residue methionine 1 forms a Peptide (Met-Gly) (interchain with G-Cter in ubiquitin) linkage. Residues 20 to 316 (YMDLKPLGCG…AEEALSHPYM (297 aa)) form the Protein kinase domain. ATP is bound by residues 26–34 (LGCGGNGLV) and lysine 49. Aspartate 152 (proton acceptor) is an active-site residue. Phosphoserine; by PAK1, PAK2 and PAK3 is present on serine 189. The SEG motif signature appears at 189 to 191 (SEG). The FRIEDE motif signature appears at 332-337 (FHIEDE). Phosphoserine occurs at positions 386, 452, 556, 558, 665, and 684. A compositionally biased stretch (polar residues) spans 701-715 (AMKSSPQIPHQTYSS). The disordered stretch occupies residues 701–721 (AMKSSPQIPHQTYSSILKHLN).

Belongs to the protein kinase superfamily. CMGC Ser/Thr protein kinase family. MAP kinase subfamily. Heterodimer with ERK4/MAPK4. Interacts with (via FRIEDE motif) MAPKAPK5. Interacts with UBE3A; this interaction may be indirect and mediated by HERC2, possibly via HERC2 interaction with NEURL4. Mg(2+) is required as a cofactor. In terms of processing, phosphorylated at Ser-189 by PAK1, PAK2 and PAK3 resulting in catalytic activation. Phosphorylated by MAPKAPK5 at other sites. Post-translationally, ubiquitination at Met-1 leads to degradation by the proteasome pathway. In terms of tissue distribution, highest expression in the skeletal muscle, followed by the brain. Also found in heart, placenta, lung, liver, pancreas, kidney and skin fibroblasts.

It is found in the cytoplasm. Its subcellular location is the nucleus. The catalysed reaction is L-seryl-[protein] + ATP = O-phospho-L-seryl-[protein] + ADP + H(+). It catalyses the reaction L-threonyl-[protein] + ATP = O-phospho-L-threonyl-[protein] + ADP + H(+). Its activity is regulated as follows. Activated by phosphorylation at Ser-189. Functionally, atypical MAPK protein. Phosphorylates microtubule-associated protein 2 (MAP2) and MAPKAPK5. The precise role of the complex formed with MAPKAPK5 is still unclear, but the complex follows a complex set of phosphorylation events: upon interaction with atypical MAPKAPK5, ERK3/MAPK6 is phosphorylated at Ser-189 and then mediates phosphorylation and activation of MAPKAPK5, which in turn phosphorylates ERK3/MAPK6. May promote entry in the cell cycle. This is Mitogen-activated protein kinase 6 (MAPK6) from Homo sapiens (Human).